The following is a 433-amino-acid chain: Protein slt1 (433 aa).

Disordered regions lie at residues 159–184, 200–234, and 252–433; these read SPEE…SEYA, NAPE…EELS, and SNKR…DEDA. Polar residues-rich tracts occupy residues 172 to 184 and 215 to 228; these read DQQT…SEYA and TLPN…QASV. A phosphoserine mark is found at S227, S229, and S269. Basic and acidic residues predominate over residues 343–353; it reads IDTKAGEKLTD. Over residues 385-421 the composition is skewed to polar residues; that stretch reads EGSNNHEQGSFNEPKSNVDSNDSASPKRPSSQASLRH. Phosphoserine is present on residues S409, S415, and S418.

This chain is Protein slt1 (slt1), found in Schizosaccharomyces pombe (strain 972 / ATCC 24843) (Fission yeast).